Consider the following 67-residue polypeptide: Lantibiotic Flvbeta.b (67 aa).

The propeptide at 1-34 (MDNNTKLQKLYEQLAATGSEKELDAMLDENMAGA) is cleaved by FlvT. Position 36 is a 2,3-didehydroalanine (Ser); by FlvM2 (Ser-36). Thr-39 and Thr-43 each carry 2,3-didehydrobutyrine; by FlvM2. 3 cross-links (beta-methyllanthionine (Thr-Cys); by FlvM2) span residues 50-56 (TTGFDWC), 58-61 (TGAC), and 62-65 (TYSC).

Post-translationally, contains DL-beta-methyllanthionine, when coepressed in E.coli with the flavecin synthetase FlvM2.

Its subcellular location is the secreted. In terms of biological role, lanthionine-containing peptide antibiotic (lantibiotic) only active on Gram-positive bacteria in synergy with Flvalpha.a. Is not active in absence of Flvalpha.a, which is encoded by the same operon than Flvbeta.b. The bactericidal activity of lantibiotics is based on depolarization of energized bacterial cytoplasmic membranes, initiated by the formation of aqueous transmembrane pores. This is Lantibiotic Flvbeta.b from Ruminococcus flavefaciens.